The chain runs to 347 residues: Hydroxymethylglutaryl-CoA synthase (347 aa).

(3S)-3-hydroxy-3-methylglutaryl-CoA is bound by residues D29 and A30. E80 serves as the catalytic Proton donor/acceptor. Residues C112 and T153 each coordinate (3S)-3-hydroxy-3-methylglutaryl-CoA. C112 serves as the catalytic Acyl-thioester intermediate. R199 contacts CoA. Residues T201 and H234 each contribute to the (3S)-3-hydroxy-3-methylglutaryl-CoA site. The active-site Proton donor/acceptor is H234. K239 contacts CoA. The (3S)-3-hydroxy-3-methylglutaryl-CoA site is built by R243, N266, and S296.

The protein belongs to the thiolase-like superfamily. Archaeal HMG-CoA synthase family. As to quaternary structure, interacts with acetoacetyl-CoA thiolase that catalyzes the precedent step in the pathway and with a DUF35 protein. The acetoacetyl-CoA thiolase/HMG-CoA synthase complex channels the intermediate via a fused CoA-binding site, which allows for efficient coupling of the endergonic thiolase reaction with the exergonic HMGCS reaction.

It carries out the reaction acetoacetyl-CoA + acetyl-CoA + H2O = (3S)-3-hydroxy-3-methylglutaryl-CoA + CoA + H(+). It functions in the pathway metabolic intermediate biosynthesis; (R)-mevalonate biosynthesis; (R)-mevalonate from acetyl-CoA: step 2/3. Its function is as follows. Catalyzes the condensation of acetyl-CoA with acetoacetyl-CoA to form 3-hydroxy-3-methylglutaryl-CoA (HMG-CoA). Functions in the mevalonate (MVA) pathway leading to isopentenyl diphosphate (IPP), a key precursor for the biosynthesis of isoprenoid compounds that are building blocks of archaeal membrane lipids. The sequence is that of Hydroxymethylglutaryl-CoA synthase from Methanocella arvoryzae (strain DSM 22066 / NBRC 105507 / MRE50).